The chain runs to 126 residues: Small ribosomal subunit protein uS11 (126 aa).

It belongs to the universal ribosomal protein uS11 family. Part of the 30S ribosomal subunit. Interacts with proteins S7 and S18. Binds to IF-3.

Located on the platform of the 30S subunit, it bridges several disparate RNA helices of the 16S rRNA. Forms part of the Shine-Dalgarno cleft in the 70S ribosome. In Orientia tsutsugamushi (strain Boryong) (Rickettsia tsutsugamushi), this protein is Small ribosomal subunit protein uS11.